The sequence spans 622 residues: Cilia- and flagella-associated protein 206 (622 aa).

Residues 570–592 form a disordered region; the sequence is SQVYPPKDTSTQSMREDSTGVPR.

This sequence belongs to the CFAP206 family.

The protein localises to the cytoplasm. It is found in the cytoskeleton. The protein resides in the cilium axoneme. It localises to the cilium basal body. In terms of biological role, essential for sperm motility and is involved in the regulation of the beating frequency of motile cilia on the epithelial cells of the respiratory tract. Required for the establishment of radial spokes in sperm flagella. The polypeptide is Cilia- and flagella-associated protein 206 (Homo sapiens (Human)).